Reading from the N-terminus, the 97-residue chain is Plastocyanin (97 aa).

Positions 1–97 (AEVKLGADDG…AGMKGEVTVT (97 aa)) constitute a Plastocyanin-like domain. Cu cation is bound by residues histidine 37, cysteine 82, histidine 85, and methionine 90.

This sequence belongs to the plastocyanin family. Cu(2+) serves as cofactor.

It localises to the plastid. The protein localises to the chloroplast thylakoid membrane. Participates in electron transfer between P700 and the cytochrome b6-f complex in photosystem I. The chain is Plastocyanin (PETE) from Daucus carota (Wild carrot).